The following is a 155-amino-acid chain: 6,7-dimethyl-8-ribityllumazine synthase (155 aa).

5-amino-6-(D-ribitylamino)uracil contacts are provided by residues Phe24, 58 to 60 (AFE), and 82 to 84 (AII). 87-88 (AT) contacts (2S)-2-hydroxy-3-oxobutyl phosphate. His90 functions as the Proton donor in the catalytic mechanism. 5-amino-6-(D-ribitylamino)uracil is bound at residue Phe115. A (2S)-2-hydroxy-3-oxobutyl phosphate-binding site is contributed by Arg129.

It belongs to the DMRL synthase family.

The enzyme catalyses (2S)-2-hydroxy-3-oxobutyl phosphate + 5-amino-6-(D-ribitylamino)uracil = 6,7-dimethyl-8-(1-D-ribityl)lumazine + phosphate + 2 H2O + H(+). It participates in cofactor biosynthesis; riboflavin biosynthesis; riboflavin from 2-hydroxy-3-oxobutyl phosphate and 5-amino-6-(D-ribitylamino)uracil: step 1/2. In terms of biological role, catalyzes the formation of 6,7-dimethyl-8-ribityllumazine by condensation of 5-amino-6-(D-ribitylamino)uracil with 3,4-dihydroxy-2-butanone 4-phosphate. This is the penultimate step in the biosynthesis of riboflavin. The sequence is that of 6,7-dimethyl-8-ribityllumazine synthase from Prosthecochloris aestuarii (strain DSM 271 / SK 413).